We begin with the raw amino-acid sequence, 291 residues long: MSNTEFHPHIGVGLRLPHHDHFHHHRPALSWLEIHSENYFQPNSFHRQQLNQMAEHYQISCHGIGLSLGSVTGVNPQHLLRLKQLVDDLQPFLVSDHLSWSENGGHYFNDLLPLPYTEEALEVFCRNVLHVQDALKRPILIENPSSYLKYQHSTISEWQFLTEVQRRTDCRLLLDLNNVYVSAFNHGFDCQTYLEAIPAACVDEIHLAGFTIKSLEQGEIWIDTHSQPVSAEVWQLYQQWIAQHGSRHTLIEWDLDLPPVDVLLNEAKKAETLLRASLLHNNPMHPSLALG.

It belongs to the UPF0276 family.

In Vibrio vulnificus (strain YJ016), this protein is UPF0276 protein VV3194.